A 622-amino-acid polypeptide reads, in one-letter code: Mitochondrial distribution and morphology protein 34 (622 aa).

The SMP-LTD domain occupies M1 to L204. Disordered stretches follow at residues Y364–V393, L442–Q468, and L572–P592. The segment covering K372–K385 has biased composition (basic residues). Residues S446–S455 show a composition bias toward low complexity. The segment covering N577 to G587 has biased composition (polar residues).

Belongs to the MDM34 family. Component of the ER-mitochondria encounter structure (ERMES) or MDM complex, composed of MMM1, MDM10, MDM12 and MDM34.

The protein resides in the mitochondrion outer membrane. Component of the ERMES/MDM complex, which serves as a molecular tether to connect the endoplasmic reticulum (ER) and mitochondria. Components of this complex are involved in the control of mitochondrial shape and protein biogenesis, and function in nonvesicular lipid trafficking between the ER and mitochondria. MDM34 is required for the interaction of the ER-resident membrane protein MMM1 and the outer mitochondrial membrane-resident beta-barrel protein MDM10. The protein is Mitochondrial distribution and morphology protein 34 of Candida albicans (strain WO-1) (Yeast).